An 82-amino-acid chain; its full sequence is DNA-directed RNA polymerase subunit Rpo5 (82 aa).

Belongs to the archaeal Rpo5/eukaryotic RPB5 RNA polymerase subunit family. In terms of assembly, part of the RNA polymerase complex.

The protein resides in the cytoplasm. The enzyme catalyses RNA(n) + a ribonucleoside 5'-triphosphate = RNA(n+1) + diphosphate. DNA-dependent RNA polymerase (RNAP) catalyzes the transcription of DNA into RNA using the four ribonucleoside triphosphates as substrates. The protein is DNA-directed RNA polymerase subunit Rpo5 of Pyrococcus abyssi (strain GE5 / Orsay).